A 323-amino-acid polypeptide reads, in one-letter code: HPr kinase/phosphorylase (323 aa).

Active-site residues include His-142 and Lys-163. An ATP-binding site is contributed by 157-164 (GESGVGKS). Residue Ser-164 coordinates Mg(2+). The Proton acceptor; for phosphorylation activity. Proton donor; for dephosphorylation activity role is filled by Asp-181. Positions 205–214 (LEVRGLGMLN) are important for the catalytic mechanism of both phosphorylation and dephosphorylation. A Mg(2+)-binding site is contributed by Glu-206. Arg-249 is a catalytic residue. The interval 270-275 (PVAAGR) is important for the catalytic mechanism of dephosphorylation.

It belongs to the HPrK/P family. As to quaternary structure, homohexamer. Requires Mg(2+) as cofactor.

The catalysed reaction is [HPr protein]-L-serine + ATP = [HPr protein]-O-phospho-L-serine + ADP + H(+). The enzyme catalyses [HPr protein]-O-phospho-L-serine + phosphate + H(+) = [HPr protein]-L-serine + diphosphate. Catalyzes the ATP- as well as the pyrophosphate-dependent phosphorylation of a specific serine residue in HPr, a phosphocarrier protein of the phosphoenolpyruvate-dependent sugar phosphotransferase system (PTS). HprK/P also catalyzes the pyrophosphate-producing, inorganic phosphate-dependent dephosphorylation (phosphorolysis) of seryl-phosphorylated HPr (P-Ser-HPr). This chain is HPr kinase/phosphorylase, found in Nitrosomonas europaea (strain ATCC 19718 / CIP 103999 / KCTC 2705 / NBRC 14298).